A 162-amino-acid chain; its full sequence is Probable chemoreceptor glutamine deamidase CheD (162 aa).

Belongs to the CheD family.

It carries out the reaction L-glutaminyl-[protein] + H2O = L-glutamyl-[protein] + NH4(+). Functionally, probably deamidates glutamine residues to glutamate on methyl-accepting chemotaxis receptors (MCPs), playing an important role in chemotaxis. This Clostridium kluyveri (strain ATCC 8527 / DSM 555 / NBRC 12016 / NCIMB 10680 / K1) protein is Probable chemoreceptor glutamine deamidase CheD.